A 318-amino-acid chain; its full sequence is C1GALT1-specific chaperone 1 (318 aa).

Over 1–6 (MLSESS) the chain is Cytoplasmic. A helical; Signal-anchor for type II membrane protein transmembrane segment spans residues 7 to 26 (SFLKGVMLGSIFCALITMLG). The Lumenal segment spans residues 27–318 (HIRIGHGNRM…FLPPNGSDND (292 aa)).

The protein belongs to the glycosyltransferase 31 family. Beta3-Gal-T subfamily. Associates with core 1 beta-3-galactosyltransferase (C1GALT1), probably not with the soluble active form. In terms of tissue distribution, ubiquitously expressed. Abundantly expressed in salivary gland, stomach, small intestine, kidney, and testis and at intermediate levels in whole brain, cerebellum, spinal cord, thymus, spleen, trachea, lung, pancreas, ovary, and uterus.

It is found in the membrane. In terms of biological role, probable chaperone required for the generation of 1 O-glycan Gal-beta1-3GalNAc-alpha1-Ser/Thr (T antigen), which is a precursor for many extended O-glycans in glycoproteins. Probably acts as a specific molecular chaperone assisting the folding/stability of core 1 beta-3-galactosyltransferase (C1GALT1). The polypeptide is C1GALT1-specific chaperone 1 (C1GALT1C1) (Homo sapiens (Human)).